Here is a 211-residue protein sequence, read N- to C-terminus: ATP phosphoribosyltransferase (211 aa).

Belongs to the ATP phosphoribosyltransferase family. Short subfamily. In terms of assembly, heteromultimer composed of HisG and HisZ subunits.

The protein localises to the cytoplasm. It carries out the reaction 1-(5-phospho-beta-D-ribosyl)-ATP + diphosphate = 5-phospho-alpha-D-ribose 1-diphosphate + ATP. The protein operates within amino-acid biosynthesis; L-histidine biosynthesis; L-histidine from 5-phospho-alpha-D-ribose 1-diphosphate: step 1/9. Functionally, catalyzes the condensation of ATP and 5-phosphoribose 1-diphosphate to form N'-(5'-phosphoribosyl)-ATP (PR-ATP). Has a crucial role in the pathway because the rate of histidine biosynthesis seems to be controlled primarily by regulation of HisG enzymatic activity. This chain is ATP phosphoribosyltransferase, found in Lacticaseibacillus paracasei (strain ATCC 334 / BCRC 17002 / CCUG 31169 / CIP 107868 / KCTC 3260 / NRRL B-441) (Lactobacillus paracasei).